The sequence spans 731 residues: Beta-galactosidase (731 aa).

An N-terminal signal peptide occupies residues 1–23 (MGVGIQTMWSILLLFSCIFSAAS). The Proton donor role is filled by Glu-182. The active-site Nucleophile is the Glu-251. Asn-459 carries N-linked (GlcNAc...) asparagine glycosylation.

The protein belongs to the glycosyl hydrolase 35 family.

It localises to the secreted. Its subcellular location is the extracellular space. The protein localises to the apoplast. It carries out the reaction Hydrolysis of terminal non-reducing beta-D-galactose residues in beta-D-galactosides.. Involved in cell wall degradation. Degrades polysaccharides containing beta-(1--&gt;4)-linked galactans, acting as an exo-(1--&gt;4)-beta-D-galactanase. The sequence is that of Beta-galactosidase from Malus domestica (Apple).